A 159-amino-acid chain; its full sequence is SsrA-binding protein (159 aa).

The interval 131–159 (KGKKLHDKRESEKERDWNRQKSRLLKDNG) is disordered. The span at 137-159 (DKRESEKERDWNRQKSRLLKDNG) shows a compositional bias: basic and acidic residues.

Belongs to the SmpB family.

It localises to the cytoplasm. Its function is as follows. Required for rescue of stalled ribosomes mediated by trans-translation. Binds to transfer-messenger RNA (tmRNA), required for stable association of tmRNA with ribosomes. tmRNA and SmpB together mimic tRNA shape, replacing the anticodon stem-loop with SmpB. tmRNA is encoded by the ssrA gene; the 2 termini fold to resemble tRNA(Ala) and it encodes a 'tag peptide', a short internal open reading frame. During trans-translation Ala-aminoacylated tmRNA acts like a tRNA, entering the A-site of stalled ribosomes, displacing the stalled mRNA. The ribosome then switches to translate the ORF on the tmRNA; the nascent peptide is terminated with the 'tag peptide' encoded by the tmRNA and targeted for degradation. The ribosome is freed to recommence translation, which seems to be the essential function of trans-translation. This chain is SsrA-binding protein, found in Rhizobium leguminosarum bv. trifolii (strain WSM2304).